Reading from the N-terminus, the 148-residue chain is Ribosomal RNA large subunit methyltransferase H (148 aa).

Residues L62, G94, and 113-118 each bind S-adenosyl-L-methionine; that span reads LSLLTL.

Belongs to the RNA methyltransferase RlmH family. Homodimer.

The protein localises to the cytoplasm. It catalyses the reaction pseudouridine(1915) in 23S rRNA + S-adenosyl-L-methionine = N(3)-methylpseudouridine(1915) in 23S rRNA + S-adenosyl-L-homocysteine + H(+). Specifically methylates the pseudouridine at position 1915 (m3Psi1915) in 23S rRNA. The chain is Ribosomal RNA large subunit methyltransferase H from Deinococcus geothermalis (strain DSM 11300 / CIP 105573 / AG-3a).